The chain runs to 205 residues: Ypt/Rab-type GTPase ypt7 (205 aa).

GTP contacts are provided by residues 17 to 23 (SGVGKTS), 33 to 40 (FSASYKAT), Gly66, 125 to 128 (NKID), and 157 to 159 (SAK). An Effector region motif is present at residues 37–45 (YKATIGADF). 2 S-geranylgeranyl cysteine lipidation sites follow: Cys203 and Cys205. Cys205 is modified (cysteine methyl ester).

Belongs to the small GTPase superfamily. Rab family. In terms of assembly, interacts with the Rab GDP dissociation inhibitor GDI1.

Its subcellular location is the vacuole. Its activity is regulated as follows. Rab activation is generally mediated by a guanine exchange factor (GEF), while inactivation through hydrolysis of bound GTP is catalyzed by a GTPase activating protein (GAP). Its function is as follows. Ypt/Rab-type GTPases are key regulators of membrane trafficking and intracellular vesicular transport. They act as molecular switches that convert between GTP-bound and GDP-bound states, and regulate virtually all steps of membrane traffic from the formation of the transport vesicle at the donor membrane to its fusion at the target membrane. In the GDP-bound state, Ypt proteins are predominantly cytosolic, solubilized through the interaction with a GDP dissociation inhibitor (GDI). In the GTP-bound state, the proteins are membrane bound and interact with specific effector proteins that select cargo, promote vesicle movement, or verify the correct site of fusion. Required for fungal morphogenesis, vacuole fusion, autophagy, stress resistance and pathogenicity. This chain is Ypt/Rab-type GTPase ypt7, found in Pyricularia oryzae (strain 70-15 / ATCC MYA-4617 / FGSC 8958) (Rice blast fungus).